A 379-amino-acid chain; its full sequence is Alpha-humulene synthase eupE (379 aa).

This sequence belongs to the terpene synthase family. Alpha-humulene synthase eupE subfamily. Requires Mg(2+) as cofactor.

The catalysed reaction is (2E,6E)-farnesyl diphosphate = alpha-humulene + diphosphate. Its pathway is secondary metabolite biosynthesis; terpenoid biosynthesis. In terms of biological role, alpha-humulene synthase; part of the gene cluster that mediates the biosynthesis of eupenifeldin, a bistropolone meroterpenoid that acts as an antitumor agent. The first step of eupenifeldin biosynthesis is the biosynthesis of 3-methylorcinaldehyde performed by the non-reducing polyketide synthase eupA. Oxidative dearomatization of 3-methylorcinaldehyde likely catalyzed by the FAD-dependent monooxygenase eupB is followed by oxidative ring expansion by the 2-oxoglutarate-dependent dioxygenase eupC to provide the first tropolone metabolite, tropolone stipitaldehyde. In parallel, generation of sesquiterpene alpha-humulene from farnesylpyrophosphate (FPP) is catalyzed by the terpene cyclase eupE. The cytochrome P450 monooxygenase eupD then hydroxylates humulene to humulenol. The putative Diels-Alderase eupF probably catalyzes the formation of the tropolone-humulene skeleton by linking humulenol and the polyketide moiety. The short-chain dehydrogenase/reductase eupG and the flavin-dependent monooxygenase eupH are also essential for eupenifeldin biosynthesis and are likely the additional decorating enzymes of the tropolone-humulene skeleton to produce final eupenifeldin or derivatives. This is Alpha-humulene synthase eupE from Phoma sp.